The chain runs to 230 residues: Ureidoacrylate amidohydrolase RutB (230 aa).

Aspartate 24 (proton acceptor) is an active-site residue. Residue lysine 133 is part of the active site. Residue cysteine 166 is the Nucleophile of the active site.

The protein belongs to the isochorismatase family. RutB subfamily.

It catalyses the reaction (Z)-3-ureidoacrylate + H2O + H(+) = (Z)-3-aminoacrylate + NH4(+) + CO2. The enzyme catalyses (Z)-3-ureidoacrylate + H2O = (Z)-3-aminoacrylate + carbamate + H(+). It carries out the reaction (Z)-2-methylureidoacrylate + H2O + H(+) = (Z)-2-methylaminoacrylate + NH4(+) + CO2. Hydrolyzes ureidoacrylate to form aminoacrylate and carbamate. The carbamate hydrolyzes spontaneously, thereby releasing one of the nitrogen atoms of the pyrimidine ring as ammonia and one of its carbon atoms as CO2. The polypeptide is Ureidoacrylate amidohydrolase RutB (Escherichia coli O127:H6 (strain E2348/69 / EPEC)).